Here is a 147-residue protein sequence, read N- to C-terminus: CRISP-1 (147 aa).

It belongs to the CRISP family. Expressed by the venom gland.

The protein localises to the secreted. This is CRISP-1 from Phoneutria keyserlingi (Brazilian wandering spider).